Consider the following 261-residue polypeptide: Small ribosomal subunit protein mS23 (261 aa).

Positions 228-261 (EQRAAAFTGAPEIPSTEDSLGLEEGVEEKQPQQA) are disordered.

This sequence belongs to the mitochondrion-specific ribosomal protein mS23 family. Component of the mitochondrial small ribosomal subunit.

The protein localises to the mitochondrion. The chain is Small ribosomal subunit protein mS23 (rsm25) from Aspergillus oryzae (strain ATCC 42149 / RIB 40) (Yellow koji mold).